Reading from the N-terminus, the 218-residue chain is Probable transaldolase (218 aa).

The Schiff-base intermediate with substrate role is filled by Lys-83.

Belongs to the transaldolase family. Type 3B subfamily.

The protein resides in the cytoplasm. The enzyme catalyses D-sedoheptulose 7-phosphate + D-glyceraldehyde 3-phosphate = D-erythrose 4-phosphate + beta-D-fructose 6-phosphate. Its pathway is carbohydrate degradation; pentose phosphate pathway; D-glyceraldehyde 3-phosphate and beta-D-fructose 6-phosphate from D-ribose 5-phosphate and D-xylulose 5-phosphate (non-oxidative stage): step 2/3. Its function is as follows. Transaldolase is important for the balance of metabolites in the pentose-phosphate pathway. This is Probable transaldolase from Thermotoga petrophila (strain ATCC BAA-488 / DSM 13995 / JCM 10881 / RKU-1).